We begin with the raw amino-acid sequence, 378 residues long: Dual-specificity RNA methyltransferase RlmN 2 (378 aa).

Glu113 serves as the catalytic Proton acceptor. Residues 119–355 (TEDRRTLCVS…AAYIRRNRGR (237 aa)) form the Radical SAM core domain. A disulfide bridge links Cys126 with Cys361. Cys133, Cys137, and Cys140 together coordinate [4Fe-4S] cluster. S-adenosyl-L-methionine-binding positions include 188 to 189 (GE), Ser220, 242 to 244 (SLN), and Asn318. Cys361 serves as the catalytic S-methylcysteine intermediate.

This sequence belongs to the radical SAM superfamily. RlmN family. The cofactor is [4Fe-4S] cluster.

It is found in the cytoplasm. It carries out the reaction adenosine(2503) in 23S rRNA + 2 reduced [2Fe-2S]-[ferredoxin] + 2 S-adenosyl-L-methionine = 2-methyladenosine(2503) in 23S rRNA + 5'-deoxyadenosine + L-methionine + 2 oxidized [2Fe-2S]-[ferredoxin] + S-adenosyl-L-homocysteine. The enzyme catalyses adenosine(37) in tRNA + 2 reduced [2Fe-2S]-[ferredoxin] + 2 S-adenosyl-L-methionine = 2-methyladenosine(37) in tRNA + 5'-deoxyadenosine + L-methionine + 2 oxidized [2Fe-2S]-[ferredoxin] + S-adenosyl-L-homocysteine. In terms of biological role, specifically methylates position 2 of adenine 2503 in 23S rRNA and position 2 of adenine 37 in tRNAs. m2A2503 modification seems to play a crucial role in the proofreading step occurring at the peptidyl transferase center and thus would serve to optimize ribosomal fidelity. The chain is Dual-specificity RNA methyltransferase RlmN 2 from Myxococcus xanthus (strain DK1622).